A 410-amino-acid polypeptide reads, in one-letter code: Pyruvate dehydrogenase complex protein X component, mitochondrial (410 aa).

The N-terminal 30 residues, 1–30 (MLSAISKVSTLKSCTRYLTKCNYHASAKLL), are a transit peptide targeting the mitochondrion. The Lipoyl-binding domain maps to 32-108 (VKTFSMPAMS…DVGEPIAYIA (77 aa)). K73 is subject to N6-lipoyllysine. Positions 169–210 (TLLPSVSLLLAENNISKQKALKEIAPSGSNGRLLKGDVLAYL) constitute a Peripheral subunit-binding (PSBD) domain.

The protein belongs to the 2-oxoacid dehydrogenase family. In terms of assembly, eukaryotic pyruvate dehydrogenase (PDH) complexes are organized as a core consisting of the oligomeric dihydrolipoamide acetyl-transferase (E2), around which are arranged multiple copies of pyruvate dehydrogenase (E1), dihydrolipoamide dehydrogenase (E3) and protein X (E3BP) bound by non-covalent bonds.

The protein resides in the mitochondrion matrix. Required for anchoring dihydrolipoamide dehydrogenase (E3) to the dihydrolipoamide transacetylase (E2) core of the pyruvate dehydrogenase complexes of eukaryotes. This specific binding is essential for a functional PDH complex. The sequence is that of Pyruvate dehydrogenase complex protein X component, mitochondrial (PDX1) from Saccharomyces cerevisiae (strain ATCC 204508 / S288c) (Baker's yeast).